A 35-amino-acid polypeptide reads, in one-letter code: KSCCKNTLGRNCYNTCRFMKKPRKTCSGLCGCKIS.

Cystine bridges form between Cys-4–Cys-32, Cys-12–Cys-30, and Cys-16–Cys-26.

Contains 4 disulfide bonds.

It localises to the secreted. Antimicrobial peptide disrupting membranes. Has antibacterial against Gram-positive bacteria S.aureus (MIC=6.5 uM) and B.subtilis (MIC=3.25 uM) but not against Gram-negative bacterium E.coli. Has antifungal activity against C.albicans (MIC=1.63 uM). This Nigella sativa (Black cumin) protein is Thionin NsW1.